A 484-amino-acid chain; its full sequence is Poly(A) RNA polymerase GLD2 (484 aa).

Phosphoserine is present on residues serine 62 and serine 69. Residues 76-92 (KRISDEKAFPLDGKRQR) carry the Nuclear localization signal motif. Serine 95 carries the post-translational modification Phosphoserine. The Mg(2+) site is built by aspartate 213 and aspartate 215. Positions 386–440 (SLGDLLLGFLKYYATEFDWNTQMISVREAKAIPRPDDMEWRNKYICVEEPFDGTN) constitute a PAP-associated domain.

It belongs to the DNA polymerase type-B-like family. GLD2 subfamily. As to quaternary structure, interacts with CPEB1, CPEB2, CPSF1 and PABPC1. Interacts with QKI isoform QKI7; promoting recruitment to miRNA miR-122 and miR-122 stabilization. Mg(2+) is required as a cofactor. It depends on Mn(2+) as a cofactor. Ubiquitous. In brain, it is highly expressed in the cerebral cortex, cerebellum, hippocampus and olfactory bulb.

Its subcellular location is the cytoplasm. It is found in the nucleus. The enzyme catalyses RNA(n) + ATP = RNA(n)-3'-adenine ribonucleotide + diphosphate. In terms of biological role, cytoplasmic poly(A) RNA polymerase that adds successive AMP monomers to the 3'-end of specific RNAs, forming a poly(A) tail. In contrast to the canonical nuclear poly(A) RNA polymerase, it only adds poly(A) to selected cytoplasmic mRNAs. Does not play a role in replication-dependent histone mRNA degradation. Adds a single nucleotide to the 3' end of specific miRNAs, monoadenylation stabilizes and prolongs the activity of some but not all miRNAs. This chain is Poly(A) RNA polymerase GLD2 (Tent2), found in Mus musculus (Mouse).